Here is a 509-residue protein sequence, read N- to C-terminus: 2,3-bisphosphoglycerate-independent phosphoglycerate mutase (509 aa).

Aspartate 11 serves as a coordination point for Mn(2+). A Phosphotyrosine modification is found at tyrosine 35. Residue serine 61 participates in Mn(2+) binding. The active-site Phosphoserine intermediate is the serine 61. Substrate-binding positions include histidine 122, 152–153 (RD), arginine 184, arginine 190, 260–263 (RPDR), and lysine 335. 5 residues coordinate Mn(2+): aspartate 402, histidine 406, aspartate 443, histidine 444, and histidine 461.

This sequence belongs to the BPG-independent phosphoglycerate mutase family. As to quaternary structure, monomer. It depends on Mn(2+) as a cofactor.

The enzyme catalyses (2R)-2-phosphoglycerate = (2R)-3-phosphoglycerate. It participates in carbohydrate degradation; glycolysis; pyruvate from D-glyceraldehyde 3-phosphate: step 3/5. In terms of biological role, essential for rapid growth and for sporulation. Catalyzes the interconversion of 2-phosphoglycerate and 3-phosphoglycerate. The polypeptide is 2,3-bisphosphoglycerate-independent phosphoglycerate mutase (Bacillus cereus (strain ATCC 10987 / NRS 248)).